The chain runs to 229 residues: Heptaprenylglyceryl phosphate synthase (229 aa).

Lysine 12 is a binding site for sn-glycerol 1-phosphate. Residues aspartate 14 and serine 40 each coordinate Mg(2+). Sn-glycerol 1-phosphate-binding positions include 159-164, glycine 189, and 209-210; these read YLEYSG and GN.

It belongs to the GGGP/HepGP synthase family. Group I subfamily. Homodimer. Mg(2+) is required as a cofactor.

It carries out the reaction sn-glycerol 1-phosphate + all-trans-heptaprenyl diphosphate = 3-heptaprenyl-sn-glycero-1-phosphate + diphosphate. Its pathway is membrane lipid metabolism; glycerophospholipid metabolism. Its function is as follows. Prenyltransferase that catalyzes in vivo the transfer of the heptaprenyl moiety of heptaprenyl pyrophosphate (HepPP; 35 carbon atoms) to the C3 hydroxyl of sn-glycerol-1-phosphate (G1P), producing heptaprenylglyceryl phosphate (HepGP). This reaction is an ether-bond-formation step in the biosynthesis of archaea-type G1P-based membrane lipids found in Bacillales. This Bacillus cereus (strain G9842) protein is Heptaprenylglyceryl phosphate synthase.